A 42-amino-acid polypeptide reads, in one-letter code: Photosystem II reaction center protein J (42 aa).

The helical transmembrane segment at 10–30 (IPLWLVATVAGLAVIALLGVF) threads the bilayer.

This sequence belongs to the PsbJ family. PSII is composed of 1 copy each of membrane proteins PsbA, PsbB, PsbC, PsbD, PsbE, PsbF, PsbH, PsbI, PsbJ, PsbK, PsbL, PsbM, PsbT, PsbX, PsbY, PsbZ, Psb30/Ycf12, at least 3 peripheral proteins of the oxygen-evolving complex and a large number of cofactors. It forms dimeric complexes.

The protein resides in the plastid. It localises to the chloroplast thylakoid membrane. In terms of biological role, one of the components of the core complex of photosystem II (PSII). PSII is a light-driven water:plastoquinone oxidoreductase that uses light energy to abstract electrons from H(2)O, generating O(2) and a proton gradient subsequently used for ATP formation. It consists of a core antenna complex that captures photons, and an electron transfer chain that converts photonic excitation into a charge separation. In Chlorokybus atmophyticus (Soil alga), this protein is Photosystem II reaction center protein J.